The primary structure comprises 122 residues: Small ribosomal subunit protein uS13 (122 aa).

The disordered stretch occupies residues 97-122 (PVRGQRTHTNAKTRKGRSRLPIAGKK).

This sequence belongs to the universal ribosomal protein uS13 family. In terms of assembly, part of the 30S ribosomal subunit. Forms a loose heterodimer with protein S19. Forms two bridges to the 50S subunit in the 70S ribosome.

Functionally, located at the top of the head of the 30S subunit, it contacts several helices of the 16S rRNA. In the 70S ribosome it contacts the 23S rRNA (bridge B1a) and protein L5 of the 50S subunit (bridge B1b), connecting the 2 subunits; these bridges are implicated in subunit movement. Contacts the tRNAs in the A and P-sites. This is Small ribosomal subunit protein uS13 from Wolbachia pipientis wMel.